We begin with the raw amino-acid sequence, 942 residues long: Isoleucine--tRNA ligase (942 aa).

Positions 58-68 (PYANGDIHIGH) match the 'HIGH' region motif. Position 566 (E566) interacts with L-isoleucyl-5'-AMP. The 'KMSKS' region signature appears at 607–611 (KMSKS). K610 contacts ATP. Positions 905, 908, 925, and 928 each coordinate Zn(2+).

Belongs to the class-I aminoacyl-tRNA synthetase family. IleS type 1 subfamily. As to quaternary structure, monomer. The cofactor is Zn(2+).

It localises to the cytoplasm. It catalyses the reaction tRNA(Ile) + L-isoleucine + ATP = L-isoleucyl-tRNA(Ile) + AMP + diphosphate. In terms of biological role, catalyzes the attachment of isoleucine to tRNA(Ile). As IleRS can inadvertently accommodate and process structurally similar amino acids such as valine, to avoid such errors it has two additional distinct tRNA(Ile)-dependent editing activities. One activity is designated as 'pretransfer' editing and involves the hydrolysis of activated Val-AMP. The other activity is designated 'posttransfer' editing and involves deacylation of mischarged Val-tRNA(Ile). In Vibrio campbellii (strain ATCC BAA-1116), this protein is Isoleucine--tRNA ligase.